Consider the following 466-residue polypeptide: Ribulose bisphosphate carboxylase/oxygenase activase, chloroplastic (466 aa).

The transit peptide at 1–48 directs the protein to the chloroplast; the sequence is MAAAFSSTVGAPASTPTNFLGKKLKKQVTSAVNYHGKSSNINRFKVMA. 156 to 163 is a binding site for ATP; sequence GGKGQGKS. Residues 429-454 form a disordered region; that stretch reads QGAQQAGNLPVPEGCTDPVAKNFDPT.

It belongs to the RuBisCO activase family.

Its subcellular location is the plastid. It localises to the chloroplast stroma. In terms of biological role, activation of RuBisCO (ribulose-1,5-bisphosphate carboxylase/oxygenase; EC 4.1.1.39) involves the ATP-dependent carboxylation of the epsilon-amino group of lysine leading to a carbamate structure. The sequence is that of Ribulose bisphosphate carboxylase/oxygenase activase, chloroplastic (RCA) from Oryza sativa subsp. japonica (Rice).